A 714-amino-acid polypeptide reads, in one-letter code: Protein spire homolog 2 (714 aa).

The 182-residue stretch at 22–203 (LSLEEVLKAY…RALFVETLEL (182 aa)) folds into the KIND domain. The disordered stretch occupies residues 136-162 (DSEDSGCGAADEGYGGPEEEEEAEGVP). WH2 domains are found at residues 248–262 (QLMRELRRGVKLKKV), 278–296 (PFEMLMQDIRARNYKLRKV), and 342–359 (LHEKILEEIKQERRLRPV). 4 positions are modified to phosphoserine: serine 371, serine 440, serine 442, and serine 476. The tract at residues 453–516 (VASGLQSATH…SSGDRPEASM (64 aa)) is disordered. The segment covering 486-496 (DQGTCPASVSD) has biased composition (polar residues). Positions 534–554 (LALTVEEVMDVRRVLVKAEME) are spir-box.

The protein belongs to the spire family.

It localises to the cytoplasm. The protein resides in the cytoskeleton. The protein localises to the cytosol. It is found in the cell membrane. Its subcellular location is the cytoplasmic vesicle membrane. In terms of biological role, acts as an actin nucleation factor, remains associated with the slow-growing pointed end of the new filament. Involved in intracellular vesicle transport along actin fibers, providing a novel link between actin cytoskeleton dynamics and intracellular transport. Required for asymmetric spindle positioning and asymmetric cell division during meiosis. Required for normal formation of the cleavage furrow and for polar body extrusion during female germ cell meiosis. Also acts in the nucleus: together with SPIRE1 and SPIRE2, promotes assembly of nuclear actin filaments in response to DNA damage in order to facilitate movement of chromatin and repair factors after DNA damage. The sequence is that of Protein spire homolog 2 (SPIRE2) from Homo sapiens (Human).